Here is a 492-residue protein sequence, read N- to C-terminus: 3-octaprenyl-4-hydroxybenzoate carboxy-lyase (492 aa).

Asn-175 provides a ligand contact to Mn(2+). Prenylated FMN-binding positions include 178 to 180 (IYR), 192 to 194 (RWL), and 197 to 198 (RG). Glu-241 contacts Mn(2+). Asp-290 serves as the catalytic Proton donor.

Belongs to the UbiD family. Homohexamer. Requires prenylated FMN as cofactor. The cofactor is Mn(2+).

The protein localises to the cell membrane. The catalysed reaction is a 4-hydroxy-3-(all-trans-polyprenyl)benzoate + H(+) = a 2-(all-trans-polyprenyl)phenol + CO2. It participates in cofactor biosynthesis; ubiquinone biosynthesis. Its function is as follows. Catalyzes the decarboxylation of 3-octaprenyl-4-hydroxy benzoate to 2-octaprenylphenol, an intermediate step in ubiquinone biosynthesis. The polypeptide is 3-octaprenyl-4-hydroxybenzoate carboxy-lyase (Salmonella choleraesuis (strain SC-B67)).